The sequence spans 205 residues: Ribosomal RNA small subunit methyltransferase G (205 aa).

S-adenosyl-L-methionine-binding positions include glycine 66, phenylalanine 71, 119 to 120, and arginine 135; that span reads IE.

It belongs to the methyltransferase superfamily. RNA methyltransferase RsmG family.

It is found in the cytoplasm. The enzyme catalyses guanosine(527) in 16S rRNA + S-adenosyl-L-methionine = N(7)-methylguanosine(527) in 16S rRNA + S-adenosyl-L-homocysteine. Specifically methylates the N7 position of guanine in position 527 of 16S rRNA. This is Ribosomal RNA small subunit methyltransferase G from Rhizobium leguminosarum bv. trifolii (strain WSM2304).